A 447-amino-acid polypeptide reads, in one-letter code: MTKVITRFAPSPTGMLHVGNIRVALLNWLYAKKHNGQFILRFDDTDLERSKQEYKDAIKDDLKFLNLHWDQTFNQLSRLSRYDEIKNLLLDKKRLYACYETPDELELKRKFQLSKGLPPMYDRASLNLTEEQTEKYIEQGRNPHYRFLVNHEPISWHDMIKGEIQYDGKALSDPIVIRADGSMTYMLCSVIDDIDYDITHIIRGEDHVSNTAIQIQMFEALNNTPTTFGHLSLIINKDEKISKRVGGFEITTLRKEIGIEAMAIASFFSLLGSSAQILPYKSMEKLINQFEISSFSKSPTIYQPKDLERLNHKLLISLDFDEVKDHLKEIDAEYIDENFWLSIRPNLQKLRDVKDWWEICHHTPNVESLNLDQEYLKQAAELLPQGAITKDSWSIWTKEITNITGRKGKELFLPLRLALTGRESGPEIADVLPLISREEIVKRLTSA.

The 'HIGH' region motif lies at 10 to 20 (PSPTGMLHVGN). The 'KMSKS' region signature appears at 240-244 (KISKR). Lys243 provides a ligand contact to ATP.

The protein belongs to the class-I aminoacyl-tRNA synthetase family. Glutamate--tRNA ligase type 1 subfamily. In terms of assembly, monomer.

The protein resides in the cytoplasm. It catalyses the reaction tRNA(Glu) + L-glutamate + ATP = L-glutamyl-tRNA(Glu) + AMP + diphosphate. Catalyzes the attachment of glutamate to tRNA(Glu) in a two-step reaction: glutamate is first activated by ATP to form Glu-AMP and then transferred to the acceptor end of tRNA(Glu). The chain is Glutamate--tRNA ligase 1 from Rickettsia akari (strain Hartford).